The chain runs to 310 residues: tRNA dimethylallyltransferase (310 aa).

12–19 (GPTATGKT) provides a ligand contact to ATP. 14-19 (TATGKT) is a substrate binding site. The tract at residues 37–40 (DSMM) is interaction with substrate tRNA.

Belongs to the IPP transferase family. In terms of assembly, monomer. Mg(2+) is required as a cofactor.

The enzyme catalyses adenosine(37) in tRNA + dimethylallyl diphosphate = N(6)-dimethylallyladenosine(37) in tRNA + diphosphate. Catalyzes the transfer of a dimethylallyl group onto the adenine at position 37 in tRNAs that read codons beginning with uridine, leading to the formation of N6-(dimethylallyl)adenosine (i(6)A). This is tRNA dimethylallyltransferase from Desulforudis audaxviator (strain MP104C).